A 295-amino-acid polypeptide reads, in one-letter code: Aspartate carbamoyltransferase catalytic subunit (295 aa).

Carbamoyl phosphate contacts are provided by Arg-49 and Thr-50. Lys-77 lines the L-aspartate pocket. 3 residues coordinate carbamoyl phosphate: Arg-99, His-127, and Gln-130. L-aspartate is bound by residues Arg-161 and Arg-212. Carbamoyl phosphate-binding residues include Gly-251 and Pro-252.

This sequence belongs to the aspartate/ornithine carbamoyltransferase superfamily. ATCase family. In terms of assembly, heterododecamer (2C3:3R2) of six catalytic PyrB chains organized as two trimers (C3), and six regulatory PyrI chains organized as three dimers (R2).

It catalyses the reaction carbamoyl phosphate + L-aspartate = N-carbamoyl-L-aspartate + phosphate + H(+). Its pathway is pyrimidine metabolism; UMP biosynthesis via de novo pathway; (S)-dihydroorotate from bicarbonate: step 2/3. Its function is as follows. Catalyzes the condensation of carbamoyl phosphate and aspartate to form carbamoyl aspartate and inorganic phosphate, the committed step in the de novo pyrimidine nucleotide biosynthesis pathway. The sequence is that of Aspartate carbamoyltransferase catalytic subunit from Campylobacter jejuni (strain RM1221).